An 844-amino-acid polypeptide reads, in one-letter code: QSIPHFSTTLNAGSSARKRRSLYLRWGKGSNKIIACVGEGATSVPYQSAEKNDSLYSSTLVKREFPPGFWKDDLIDSLTSSHKVAASDEKRIETLISEIKNMFRCMGYGETNPSAYDTAWVARIPALDGSDNPHFPETVEWILQNQLKDGSWGEGFYFLAYDRILATLACIITLTLWRTGETQVHKGIEFFRTQAGKMEDEADSHRPSGFEIVFPAMLKEAKILGLDLPYDLPFLKQIIEKREAKLKRIPTDVLYALPTTLLYSLEGLQEIVDWQKIMKLQSKDGSFLSSPASTAAVFMRTGNKKCLDFLNFVLKKFGNHVPCHYPLDLFERLWAVDTVERLGIDRHFKEEIKEALDYVYSHWDERGIGWARENPVPDIDDTAMGLRILRLHGYNVSSDVLKTFRDENGEFFCFLGQTQRGVTDMLNVNRCSHVSFPGETIMEEAKLCTERYLRNALENVDAFDKWAFKKNIRGEVEYALKYPWHKSMPRLEARSYIENYGPDDVWLGKTVYMMPYISNEKYLELAKLDFNKVQSIHQTELQDLRRWWKSSGFTDLNFTRERVTEIYFSPASFIFEPEFSKCREVYTKTSNFTVILDDLYDAHGSLDDLKLFTESVKRWDLSLVDQMPQQMKICFVGFYNTFNEIAKEGRESQGRDVLGYIQNVWKVQLEAYTKEAEWSEAKYVPSFNEYIENASVSIALGTVVLISALFTGEVLTDEVLSKIDRGSRFLQLMGLTGRLVNDTKTYQAERGQGEVASAIQCYMKDHPKISEEEALKHVYTVMENSLEELNREFVNNKIPDIYRRLVFETARIMQLFYMQGDGLTLSHDMEIKEHVKNCLFQPVA.

The N-terminal 46 residues, 1-46 (QSIPHFSTTLNAGSSARKRRSLYLRWGKGSNKIIACVGEGATSVPY), are a transit peptide targeting the chloroplast. Lys245 contacts substrate. Residues Asp378 and Asp380 each contribute to the Mg(2+) site. The short motif at 378–381 (DIDD) is the DXDD motif element. Residue Lys465 coordinates substrate. Residues Asp597, Asp601, Asn741, Thr745, and Glu749 each coordinate Mg(2+). A DDXXD motif motif is present at residues 597–601 (DDLYD).

The protein belongs to the terpene synthase family. Tpsd subfamily. In terms of assembly, monomer. Mg(2+) is required as a cofactor.

The protein resides in the plastid. It localises to the chloroplast. The catalysed reaction is (2E,6E,10E)-geranylgeranyl diphosphate = (+)-copalyl diphosphate. It carries out the reaction (+)-copalyl diphosphate = abieta-7,13-diene + diphosphate. It catalyses the reaction (+)-copalyl diphosphate = neoabietadiene + diphosphate. The enzyme catalyses (+)-copalyl diphosphate = abieta-8(14),12-diene + diphosphate. It participates in terpene metabolism; oleoresin biosynthesis. Its function is as follows. Involved in defensive oleoresin formation in conifers in response to insect attack or other injury. Involved in diterpene (C20) olefins biosynthesis. Bifunctional enzyme that catalyzes two sequential cyclizations of geranylgeranyl diphosphate (GGPP) to abietadiene. The copalyl diphosphate (CPP) intermediate diffuses freely between the 2 active sites in the enzyme. In Abies balsamea (Balsam fir), this protein is Bifunctional abietadiene synthase, chloroplastic (LAS).